Reading from the N-terminus, the 86-residue chain is Putative sodium channel toxin Ts17 (86 aa).

Positions 1 to 19 (MNYFIFLVVACLLTAGTEG) are cleaved as a signal peptide. The 62-residue stretch at 21–82 (KDGYPVEGDN…EPTKTSGRCK (62 aa)) folds into the LCN-type CS-alpha/beta domain. 4 disulfide bridges follow: Cys-31–Cys-81, Cys-35–Cys-57, Cys-43–Cys-64, and Cys-47–Cys-66. Pro-83 carries the post-translational modification Proline amide.

The protein belongs to the long (4 C-C) scorpion toxin superfamily. Sodium channel inhibitor family. Alpha subfamily. In terms of tissue distribution, expressed by the venom gland.

It localises to the secreted. Alpha toxins bind voltage-independently at site-3 of sodium channels (Nav) and inhibit the inactivation of the activated channels, thereby blocking neuronal transmission. This chain is Putative sodium channel toxin Ts17, found in Tityus serrulatus (Brazilian scorpion).